The sequence spans 552 residues: CTP synthase (552 aa).

Residues 1-265 (MTKYIFITGG…DEIVVRKLRL (265 aa)) are amidoligase domain. Residue Ser13 participates in CTP binding. Ser13 contributes to the UTP binding site. ATP is bound by residues 14–19 (SLGKGI) and Asp71. Mg(2+) is bound by residues Asp71 and Glu139. CTP is bound by residues 146 to 148 (DIE), 186 to 191 (KTKPTQ), and Lys222. UTP contacts are provided by residues 186 to 191 (KTKPTQ) and Lys222. Positions 290–541 (TVAMVGKYVN…VRAARARSEG (252 aa)) constitute a Glutamine amidotransferase type-1 domain. Gly351 is a binding site for L-glutamine. Residue Cys378 is the Nucleophile; for glutamine hydrolysis of the active site. L-glutamine is bound by residues 379 to 382 (LGMQ), Glu402, and Arg469. Catalysis depends on residues His514 and Glu516.

Belongs to the CTP synthase family. Homotetramer.

The catalysed reaction is UTP + L-glutamine + ATP + H2O = CTP + L-glutamate + ADP + phosphate + 2 H(+). It carries out the reaction L-glutamine + H2O = L-glutamate + NH4(+). The enzyme catalyses UTP + NH4(+) + ATP = CTP + ADP + phosphate + 2 H(+). The protein operates within pyrimidine metabolism; CTP biosynthesis via de novo pathway; CTP from UDP: step 2/2. Allosterically activated by GTP, when glutamine is the substrate; GTP has no effect on the reaction when ammonia is the substrate. The allosteric effector GTP functions by stabilizing the protein conformation that binds the tetrahedral intermediate(s) formed during glutamine hydrolysis. Inhibited by the product CTP, via allosteric rather than competitive inhibition. In terms of biological role, catalyzes the ATP-dependent amination of UTP to CTP with either L-glutamine or ammonia as the source of nitrogen. Regulates intracellular CTP levels through interactions with the four ribonucleotide triphosphates. This chain is CTP synthase, found in Methylococcus capsulatus (strain ATCC 33009 / NCIMB 11132 / Bath).